The primary structure comprises 369 residues: Protein V (369 aa).

Disordered regions lie at residues 1 to 24 and 38 to 320; these read MDQDALISKEDSEVEREASGGRES and SEPT…GHRR. Basic and acidic residues predominate over residues 7–20; it reads ISKEDSEVEREASG. Residues 50 to 61 are compositionally biased toward polar residues; it reads LHNTINTLQRPG. Basic and acidic residues-rich tracts occupy residues 99 to 110 and 150 to 168; these read AEAHARNVDKQN and GAEDENREMAANPDKRGED. Residues serine 249, serine 257, and serine 260 each carry the phosphoserine; by host modification. Positions 318, 337, 341, 353, 355, 358, 362, and 365 each coordinate Zn(2+).

It belongs to the paramyxoviruses V protein family. Interacts with host IFIH1/MDA5 and DHX58/LGP2. Interacts with host IRF3. Interacts with host RIGI regulatory protein (via CARDs domain) and host TRIM25 (via SPRY domain); these interactions prevent TRIM25-mediated ubiquitination of RIG-I and disrupts downstream RIG-I signaling.

Its subcellular location is the host cytoplasm. In terms of biological role, plays an essential role in the inhibition of host immune response. Prevents the establishment of cellular antiviral state by blocking interferon-alpha/beta (IFN-alpha/beta) production and signaling pathway. Interacts with host IFIH1/MDA5 and DHX58/LGP2 to inhibit the transduction pathway involved in the activation of IFN-beta promoter, thus protecting the virus against cell antiviral state. Also interacts with and inhibits host IRF3. Blocks the type I interferon signaling pathway by disrupting the RIG-I signaling pathway. The polypeptide is Protein V (P/V/C) (Sendai virus (strain Hamamatsu) (SeV)).